Here is a 552-residue protein sequence, read N- to C-terminus: Glutamate--tRNA ligase (552 aa).

Residues 102–112 carry the 'HIGH' region motif; that stretch reads PNPSGPLHIGH.

It belongs to the class-I aminoacyl-tRNA synthetase family. Glutamate--tRNA ligase type 2 subfamily.

It localises to the cytoplasm. The enzyme catalyses tRNA(Glu) + L-glutamate + ATP = L-glutamyl-tRNA(Glu) + AMP + diphosphate. In terms of biological role, catalyzes the attachment of glutamate to tRNA(Glu) in a two-step reaction: glutamate is first activated by ATP to form Glu-AMP and then transferred to the acceptor end of tRNA(Glu). This Methanothermobacter marburgensis (strain ATCC BAA-927 / DSM 2133 / JCM 14651 / NBRC 100331 / OCM 82 / Marburg) (Methanobacterium thermoautotrophicum) protein is Glutamate--tRNA ligase.